Consider the following 284-residue polypeptide: RNase adapter protein RapZ (284 aa).

8 to 15 (GRSGSGKS) contacts ATP. 56–59 (DVRN) contributes to the GTP binding site. The RNA-binding stretch occupies residues 266–284 (RSRGKNVQSRHRTLEKRKS).

Belongs to the RapZ-like family. RapZ subfamily. Homotrimer.

In terms of biological role, modulates the synthesis of GlmS, by affecting the processing and stability of the regulatory small RNA GlmZ. When glucosamine-6-phosphate (GlcN6P) concentrations are high in the cell, RapZ binds GlmZ and targets it to cleavage by RNase E. Consequently, GlmZ is inactivated and unable to activate GlmS synthesis. Under low GlcN6P concentrations, RapZ is sequestered and inactivated by an other regulatory small RNA, GlmY, preventing GlmZ degradation and leading to synthesis of GlmS. The polypeptide is RNase adapter protein RapZ (Cronobacter sakazakii (strain ATCC BAA-894) (Enterobacter sakazakii)).